A 128-amino-acid polypeptide reads, in one-letter code: Large ribosomal subunit protein bL12 (128 aa).

Belongs to the bacterial ribosomal protein bL12 family. In terms of assembly, homodimer. Part of the ribosomal stalk of the 50S ribosomal subunit. Forms a multimeric L10(L12)X complex, where L10 forms an elongated spine to which 2 to 4 L12 dimers bind in a sequential fashion. Binds GTP-bound translation factors.

Functionally, forms part of the ribosomal stalk which helps the ribosome interact with GTP-bound translation factors. Is thus essential for accurate translation. The polypeptide is Large ribosomal subunit protein bL12 (Synechococcus sp. (strain ATCC 27144 / PCC 6301 / SAUG 1402/1) (Anacystis nidulans)).